A 625-amino-acid chain; its full sequence is Histone-lysine N-methyltransferase set9 (625 aa).

Residues 120 to 234 (SPFEVTTTNR…IGEEITVSYG (115 aa)) enclose the SET domain. 5 disordered regions span residues 260-348 (PHVD…ETSI), 368-405 (GSAV…TSIG), 432-451 (ITGQ…DMLS), 457-476 (TDNP…HGVV), and 582-625 (VSFG…RMTM). Composition is skewed to polar residues over residues 269-286 (SKAS…NDSL) and 372-386 (EVSQ…SSPS). Basic residues predominate over residues 462–473 (KPKRSRGSRWKH). Over residues 593–610 (SEPRTETEDSEACDDRRN) the composition is skewed to basic and acidic residues. Positions 611–625 (TRASRTRTRSLRMTM) are enriched in basic residues.

It belongs to the class V-like SAM-binding methyltransferase superfamily. Histone-lysine methyltransferase family. Suvar4-20 subfamily.

It localises to the nucleus. It is found in the chromosome. It catalyses the reaction L-lysyl(20)-[histone H4] + 3 S-adenosyl-L-methionine = N(6),N(6),N(6)-trimethyl-L-lysyl(20)-[histone H4] + 3 S-adenosyl-L-homocysteine + 3 H(+). Histone methyltransferase that trimethylates 'Lys-20' of histone H4 to form H4K20me3. This Aspergillus oryzae (strain ATCC 42149 / RIB 40) (Yellow koji mold) protein is Histone-lysine N-methyltransferase set9 (set9).